The chain runs to 310 residues: p-hydroxybenzoic acid efflux pump subunit AaeA (310 aa).

A helical transmembrane segment spans residues Ala-12–Tyr-32.

The protein belongs to the membrane fusion protein (MFP) (TC 8.A.1) family.

The protein resides in the cell inner membrane. Its function is as follows. Forms an efflux pump with AaeB. In Escherichia coli O139:H28 (strain E24377A / ETEC), this protein is p-hydroxybenzoic acid efflux pump subunit AaeA.